A 282-amino-acid chain; its full sequence is Acyl-CoA-binding domain-containing protein 6 (282 aa).

Residues 1 to 34 (MATPFLPAGATTGDSGGELSSGDDSGDLESFQTP) form a disordered region. Residue S41 is modified to Phosphoserine. Positions 42–127 (LAELFEKAAA…VKKLDPGWNP (86 aa)) constitute an ACB domain. An acyl-CoA-binding positions include 69 to 73 (YARYK) and K95. S106 is subject to Phosphoserine. Position 114 (Y114) interacts with an acyl-CoA. ANK repeat units follow at residues 191 to 220 (EGRALLHWACDRGHKELVKVLLQCEAGINC) and 224 to 253 (EGQTALHYAAACEFSDIVELLLQSGADPTL).

Monomer.

It is found in the cytoplasm. The protein resides in the nucleus. Its function is as follows. Binds long-chain acyl-coenzyme A molecules with a strong preference for unsaturated C18:1-CoA, lower affinity for unsaturated C20:4-CoA, and very weak affinity for saturated C16:0-CoA. Does not bind fatty acids. Plays a role in protein N-myristoylation. This Rattus norvegicus (Rat) protein is Acyl-CoA-binding domain-containing protein 6 (Acbd6).